We begin with the raw amino-acid sequence, 249 residues long: 5'-nucleotidase SurE (249 aa).

A divalent metal cation-binding residues include D8, D9, S39, and N91.

Belongs to the SurE nucleotidase family. A divalent metal cation is required as a cofactor.

Its subcellular location is the cytoplasm. It catalyses the reaction a ribonucleoside 5'-phosphate + H2O = a ribonucleoside + phosphate. Functionally, nucleotidase that shows phosphatase activity on nucleoside 5'-monophosphates. The protein is 5'-nucleotidase SurE of Haemophilus influenzae (strain 86-028NP).